A 506-amino-acid chain; its full sequence is Maturase K (506 aa).

It belongs to the intron maturase 2 family. MatK subfamily.

The protein resides in the plastid. The protein localises to the chloroplast. Its function is as follows. Usually encoded in the trnK tRNA gene intron. Probably assists in splicing its own and other chloroplast group II introns. This chain is Maturase K, found in Jurinea cyanoides.